Reading from the N-terminus, the 263-residue chain is Endonuclease 8 (263 aa).

Pro2 acts as the Schiff-base intermediate with DNA in catalysis. Glu3 (proton donor) is an active-site residue. The active-site Proton donor; for beta-elimination activity is Lys53. DNA-binding residues include Gln70, Arg125, and Asn169. Residues Lys229–Lys263 form an FPG-type zinc finger. The Proton donor; for delta-elimination activity role is filled by Arg253.

It belongs to the FPG family. It depends on Zn(2+) as a cofactor.

It catalyses the reaction 2'-deoxyribonucleotide-(2'-deoxyribose 5'-phosphate)-2'-deoxyribonucleotide-DNA = a 3'-end 2'-deoxyribonucleotide-(2,3-dehydro-2,3-deoxyribose 5'-phosphate)-DNA + a 5'-end 5'-phospho-2'-deoxyribonucleoside-DNA + H(+). In terms of biological role, involved in base excision repair of DNA damaged by oxidation or by mutagenic agents. Acts as a DNA glycosylase that recognizes and removes damaged bases. Has a preference for oxidized pyrimidines, such as thymine glycol, 5,6-dihydrouracil and 5,6-dihydrothymine. Has AP (apurinic/apyrimidinic) lyase activity and introduces nicks in the DNA strand. Cleaves the DNA backbone by beta-delta elimination to generate a single-strand break at the site of the removed base with both 3'- and 5'-phosphates. In Salmonella schwarzengrund (strain CVM19633), this protein is Endonuclease 8.